Reading from the N-terminus, the 250-residue chain is Ribosomal RNA small subunit methyltransferase J (250 aa).

Residues 96–97 (RD) and Asp168 each bind S-adenosyl-L-methionine.

This sequence belongs to the methyltransferase superfamily. RsmJ family.

The protein resides in the cytoplasm. The catalysed reaction is guanosine(1516) in 16S rRNA + S-adenosyl-L-methionine = N(2)-methylguanosine(1516) in 16S rRNA + S-adenosyl-L-homocysteine + H(+). Its function is as follows. Specifically methylates the guanosine in position 1516 of 16S rRNA. In Neisseria meningitidis serogroup C (strain 053442), this protein is Ribosomal RNA small subunit methyltransferase J.